Here is a 194-residue protein sequence, read N- to C-terminus: Anaphase-promoting complex subunit CDC26 (194 aa).

Residues E47–H194 are disordered. 2 stretches are compositionally biased toward polar residues: residues G79–R94 and L102–S112. 2 stretches are compositionally biased toward low complexity: residues D154–P166 and T174–H194.

Belongs to the CDC26 family. As to quaternary structure, the APC/C complex is probably composed of at least 12 subunits: apc-2, apc-10, apc-11, cdc-26, emb-1, emb-27, emb-30, mat-1, mat-2, mat-3, such-1 and gfi-3.

It is found in the nucleus. It participates in protein modification; protein ubiquitination. In terms of biological role, probable component of the anaphase promoting complex/cyclosome (APC/C), a cell cycle-regulated E3 ubiquitin ligase that controls progression through mitosis and the G1 phase of the cell cycle. The APC/C complex acts by mediating ubiquitination and subsequent degradation of target proteins. Developmental role in early embryogenesis and the metaphase to anaphase transition in meiosis and mitosis. Required for embryonic anterior-posterior axis formation. The protein is Anaphase-promoting complex subunit CDC26 of Caenorhabditis elegans.